Consider the following 684-residue polypeptide: Zinc finger BED domain-containing protein RICESLEEPER 4 (684 aa).

The segment at 54-113 adopts a BED-type zinc-finger fold; that stretch reads KRKSAIWEHFTLVDVSDGCKRASCIHCNQSLAYSSGSKNSGTSHLTRHIAEWCRVLKDRQ. The Zn(2+) site is built by cysteine 77, cysteine 80, histidine 101, and cysteine 106. The HATC (Hobo-Ac-Tam3) domain stretch occupies residues 595–680; the sequence is ELELYLEEAL…EALLCAKDWL (86 aa).

Homodimer.

The protein localises to the nucleus. Its function is as follows. Transposase-like protein that is essential for plant growth and development. May regulate global gene expression by recruiting other cellular factors. This is Zinc finger BED domain-containing protein RICESLEEPER 4 from Oryza sativa subsp. japonica (Rice).